The primary structure comprises 737 residues: FYVE, RhoGEF and PH domain-containing protein 3 (737 aa).

Residues 1 to 151 (MESGGGSSTP…KADKDAGLAQ (151 aa)) are disordered. Residues 126–136 (ADSDVGEEPDS) show a composition bias toward acidic residues. At serine 128 the chain carries Phosphoserine. The DH domain maps to 157–341 (KLLHIAQELL…STAANHSNAA (185 aa)). Residues 370–469 (ELIKEGQIQK…WIQIIQATIE (100 aa)) form the PH 1 domain. A disordered region spans residues 487 to 533 (QDEDPSLSPDMPITSTSPVEPVVTTEGGSGAAGLEPRKLSSKTRRDK). Residues 500-512 (TSTSPVEPVVTTE) are compositionally biased toward low complexity. Positions 521 to 533 (EPRKLSSKTRRDK) are enriched in basic and acidic residues. The FYVE-type zinc-finger motif lies at 532 to 588 (DKEKQSCKSCGETFNSITKRRHHCKLCGVVICGKCSEFKAENSRQSRVCRECFLTQP). The Zn(2+) site is built by cysteine 538, cysteine 541, cysteine 555, cysteine 558, cysteine 563, cysteine 566, cysteine 580, and cysteine 583. Disordered regions lie at residues 589 to 620 (VAPE…SLLC) and 713 to 737 (AARG…AAAP). Residues 616–715 (PSLLCGPLRL…WLETLSTAAR (100 aa)) enclose the PH 2 domain.

It localises to the cytoplasm. It is found in the cytoskeleton. Promotes the formation of filopodia. May activate CDC42, a member of the Ras-like family of Rho- and Rac proteins, by exchanging bound GDP for free GTP. Plays a role in regulating the actin cytoskeleton and cell shape. In Pongo abelii (Sumatran orangutan), this protein is FYVE, RhoGEF and PH domain-containing protein 3 (FGD3).